Consider the following 108-residue polypeptide: Complement inhibitor CirpT2 (108 aa).

An N-terminal signal peptide occupies residues 1 to 19; it reads MRTLVASLCVFAVFSAVCC. 4 cysteine pairs are disulfide-bonded: cysteine 40-cysteine 64, cysteine 59-cysteine 98, cysteine 76-cysteine 99, and cysteine 85-cysteine 104.

Belongs to the CirpT family. In terms of tissue distribution, expressed in salivary glands.

It is found in the secreted. Complement inhibitor. Prevents complement-mediated activation of C5 by sterically preventing direct binding of C5 to its convertase (binding with domains MG4 and MG5). Binds C5 at a different binding site than the other tick complement inhibitors OmCI and RaCI3, and the drug eculizumab. Inhibits the complement in human, rat and guinea pig, and also shows a reduced inhibition in rabbit and pig. This Dermacentor andersoni (Rocky mountain wood tick) protein is Complement inhibitor CirpT2.